A 171-amino-acid chain; its full sequence is Myelin basic protein (171 aa).

An N-acetylalanine modification is found at A1. S7 and S12 each carry phosphoserine. The residue at position 14 (Y14) is a Phosphotyrosine. T17 carries the phosphothreonine modification. S19 bears the Phosphoserine mark. T20 bears the Phosphothreonine mark. Citrulline occurs at positions 25 and 31. A Phosphothreonine modification is found at T35. The residue at position 40 (S40) is a Phosphoserine. R43 and R49 each carry omega-N-methylarginine. The segment at 44-115 is disordered; sequence FFGGDRGAPK…GRGLSLSRFS (72 aa). Residue S56 is modified to Phosphoserine. Y69 carries the phosphotyrosine modification. S76 is subject to Phosphoserine. Residues T80, T95, and T98 each carry the phosphothreonine modification. Position 103 is a deamidated glutamine (Q103). R107 carries the post-translational modification Omega-N-methylarginine; alternate. R107 is subject to Symmetric dimethylarginine; alternate. S115 is modified (phosphoserine). Citrulline occurs at positions 122 and 130. Residue Q148 is modified to Deamidated glutamine. Citrulline is present on R160. Position 162 is a phosphoserine (S162). The residue at position 166 (S166) is a Phosphoserine; by UHMK1. R171 carries the citrulline modification.

The protein belongs to the myelin basic protein family. Homodimer. In terms of processing, as in other animals, several charge isomers may be produced as a result of optional post-translational modifications, such as phosphorylation of serine or threonine residues, deamidation of glutamine or asparagine residues, citrullination and methylation of arginine residues. Phosphorylated by TAOK2, VRK2, MAPK11, MAPK12, MAPK14 and MINK1. Post-translationally, proteolytically cleaved in B cell lysosomes by cathepsin CTSG which degrades the major immunogenic MBP epitope and prevents the activation of MBP-specific autoreactive T cells.

The protein localises to the myelin membrane. Is, with PLP, the most abundant protein component of the myelin membrane in the CNS. Has a role in both the formation and stabilization of this compact multilayer arrangement of bilayers. Each splice variant and charge isomer may have a specialized function in the assembly of an optimized, biochemically functional myelin membrane. This is Myelin basic protein (MBP) from Pan troglodytes (Chimpanzee).